The sequence spans 660 residues: Macrolide export ATP-binding/permease protein MacB (660 aa).

Positions 10 to 248 constitute an ABC transporter domain; sequence LVLENIVRKF…TDSQALYGKQ (239 aa). 46–53 contacts ATP; sequence GASGSGKS. The next 4 helical transmembrane spans lie at 285 to 305, 532 to 552, 593 to 613, and 625 to 645; these read FLTM…VALG, ILTL…GIGV, VIGG…FLLF, and SIIL…FSPA.

It belongs to the ABC transporter superfamily. Macrolide exporter (TC 3.A.1.122) family. Homodimer.

It localises to the cell inner membrane. Functionally, non-canonical ABC transporter that contains transmembrane domains (TMD), which form a pore in the inner membrane, and an ATP-binding domain (NBD), which is responsible for energy generation. Confers resistance against macrolides. The polypeptide is Macrolide export ATP-binding/permease protein MacB (Bartonella henselae (strain ATCC 49882 / DSM 28221 / CCUG 30454 / Houston 1) (Rochalimaea henselae)).